A 506-amino-acid chain; its full sequence is DEAD-box ATP-dependent RNA helicase CshA (506 aa).

A Q motif motif is present at residues 2-30; the sequence is QNFKELGISDNTVQSLESMGFKEPTPIQK. Positions 33–203 constitute a Helicase ATP-binding domain; sequence IPYALQGIDI…QQFMKSPKII (171 aa). Position 46-53 (46-53) interacts with ATP; the sequence is AQTGTGKT. The DEAD box motif lies at 150–153; the sequence is DEAD. The Helicase C-terminal domain maps to 214 to 375; it reads QIEEFYTIVK…LRPPHRKEVL (162 aa). Residues 436 to 506 are disordered; it reads EKPLSRKGRN…KGRTFADHQK (71 aa). Positions 468–480 are enriched in basic residues; sequence KRSKGYSSKKKST.

This sequence belongs to the DEAD box helicase family. CshA subfamily. In terms of assembly, oligomerizes, may be a member of the RNA degradosome.

The protein resides in the cytoplasm. The enzyme catalyses ATP + H2O = ADP + phosphate + H(+). Functionally, DEAD-box RNA helicase possibly involved in RNA degradation. Unwinds dsRNA in both 5'- and 3'-directions, has RNA-dependent ATPase activity. The chain is DEAD-box ATP-dependent RNA helicase CshA from Staphylococcus aureus (strain MW2).